A 29-amino-acid polypeptide reads, in one-letter code: Trypsin inhibitor 1 (29 aa).

3 cysteine pairs are disulfide-bonded: Cys-3–Cys-20, Cys-10–Cys-22, and Cys-16–Cys-28.

Belongs to the protease inhibitor I7 (squash-type serine protease inhibitor) family.

The protein resides in the secreted. Inhibits trypsin. This Luffa aegyptiaca (Sponge gourd) protein is Trypsin inhibitor 1.